Consider the following 328-residue polypeptide: Anthranilate phosphoribosyltransferase (328 aa).

Residues Gly-79, 82–83, Thr-87, 89–92, 107–115, and Ser-119 each bind 5-phospho-alpha-D-ribose 1-diphosphate; these read GD, NIST, and KHGNYAVSS. Residue Gly-79 coordinates anthranilate. Ser-91 is a binding site for Mg(2+). Residue Asn-110 participates in anthranilate binding. Arg-165 lines the anthranilate pocket. 2 residues coordinate Mg(2+): Asp-223 and Glu-224.

It belongs to the anthranilate phosphoribosyltransferase family. As to quaternary structure, homodimer. Mg(2+) serves as cofactor.

The enzyme catalyses N-(5-phospho-beta-D-ribosyl)anthranilate + diphosphate = 5-phospho-alpha-D-ribose 1-diphosphate + anthranilate. Its pathway is amino-acid biosynthesis; L-tryptophan biosynthesis; L-tryptophan from chorismate: step 2/5. Catalyzes the transfer of the phosphoribosyl group of 5-phosphorylribose-1-pyrophosphate (PRPP) to anthranilate to yield N-(5'-phosphoribosyl)-anthranilate (PRA). The protein is Anthranilate phosphoribosyltransferase of Cytophaga hutchinsonii (strain ATCC 33406 / DSM 1761 / CIP 103989 / NBRC 15051 / NCIMB 9469 / D465).